Consider the following 1391-residue polypeptide: DNA-directed RNA polymerase subunit beta' (1391 aa).

Cys-72, Cys-74, Cys-87, and Cys-90 together coordinate Zn(2+). Mg(2+) is bound by residues Asp-462, Asp-464, and Asp-466. Zn(2+) is bound by residues Cys-816, Cys-890, Cys-897, and Cys-900.

Belongs to the RNA polymerase beta' chain family. The RNAP catalytic core consists of 2 alpha, 1 beta, 1 beta' and 1 omega subunit. When a sigma factor is associated with the core the holoenzyme is formed, which can initiate transcription. Mg(2+) serves as cofactor. Zn(2+) is required as a cofactor.

The enzyme catalyses RNA(n) + a ribonucleoside 5'-triphosphate = RNA(n+1) + diphosphate. Its function is as follows. DNA-dependent RNA polymerase catalyzes the transcription of DNA into RNA using the four ribonucleoside triphosphates as substrates. In Neisseria meningitidis serogroup C / serotype 2a (strain ATCC 700532 / DSM 15464 / FAM18), this protein is DNA-directed RNA polymerase subunit beta'.